The primary structure comprises 703 residues: Epidermal growth factor receptor (703 aa).

Positions 1–30 are cleaved as a signal peptide; that stretch reads MGVRSPLSASGPRGAAVLVLLLLGVALCSA. The Extracellular segment spans residues 31–654; the sequence is VEEKKVCQGT…GCPNGSKTPS (624 aa). Cysteine 37 and cysteine 64 are disulfide-bonded. N-linked (GlcNAc...) asparagine glycosylation is found at asparagine 134, asparagine 190, and asparagine 200. Disulfide bonds link cysteine 164–cysteine 194, cysteine 197–cysteine 206, cysteine 201–cysteine 214, cysteine 222–cysteine 230, cysteine 226–cysteine 238, cysteine 239–cysteine 247, cysteine 243–cysteine 255, cysteine 258–cysteine 267, cysteine 271–cysteine 298, cysteine 302–cysteine 314, cysteine 318–cysteine 333, cysteine 336–cysteine 340, and cysteine 344–cysteine 369. Asparagine 359, asparagine 368, and asparagine 420 each carry an N-linked (GlcNAc...) asparagine glycan. Cystine bridges form between cysteine 477-cysteine 506, cysteine 513-cysteine 522, cysteine 517-cysteine 530, cysteine 533-cysteine 542, cysteine 546-cysteine 562, cysteine 565-cysteine 581, cysteine 569-cysteine 589, cysteine 592-cysteine 601, cysteine 605-cysteine 627, cysteine 630-cysteine 638, and cysteine 634-cysteine 646. Asparagine 573 and asparagine 578 each carry an N-linked (GlcNAc...) asparagine glycan. Residues asparagine 613 and asparagine 633 are each glycosylated (N-linked (GlcNAc...) asparagine). The N-linked (GlcNAc...) asparagine glycan is linked to asparagine 648. The chain crosses the membrane as a helical span at residues 655–667; sequence IAAGVVGGLLCLV. Residues 668–703 are Cytoplasmic-facing; sequence VVGLGIGLYLRRRHIVRKRTLRRLLQERELVEPLTP. A phosphothreonine mark is found at threonine 687 and threonine 702.

It belongs to the protein kinase superfamily. Tyr protein kinase family. EGF receptor subfamily. As to quaternary structure, binding of the ligand triggers homo- and/or heterodimerization of the receptor triggering its autophosphorylation. Phosphorylated. Autophosphorylates.

The protein resides in the cell membrane. Its subcellular location is the endoplasmic reticulum membrane. It localises to the golgi apparatus membrane. It is found in the nucleus membrane. The protein localises to the endosome. The protein resides in the endosome membrane. Its subcellular location is the nucleus. The enzyme catalyses L-tyrosyl-[protein] + ATP = O-phospho-L-tyrosyl-[protein] + ADP + H(+). Endocytosis and inhibition of the activated EGFR by phosphatases constitute immediate regulatory mechanisms. Moreover, inducible feedback inhibitors may constitute alternative regulatory mechanisms for the EGFR signaling. In terms of biological role, receptor tyrosine kinase binding ligands of the EGF family and activating several signaling cascades to convert extracellular cues into appropriate cellular responses. Known ligands include EGF and TGFA/TGF-alpha. Ligand binding triggers receptor homo- and/or heterodimerization and autophosphorylation on key cytoplasmic residues. The phosphorylated receptor recruits adapter proteins like GRB2 which in turn activates complex downstream signaling cascades. Activates at least 4 major downstream signaling cascades including the RAS-RAF-MEK-ERK, PI3 kinase-AKT, PLCgamma-PKC and STATs modules. May also activate the NF-kappa-B signaling cascade. This Gallus gallus (Chicken) protein is Epidermal growth factor receptor (EGFR).